A 156-amino-acid chain; its full sequence is Putative pre-16S rRNA nuclease (156 aa).

It belongs to the YqgF nuclease family.

It localises to the cytoplasm. Functionally, could be a nuclease involved in processing of the 5'-end of pre-16S rRNA. This chain is Putative pre-16S rRNA nuclease, found in Ehrlichia chaffeensis (strain ATCC CRL-10679 / Arkansas).